Reading from the N-terminus, the 66-residue chain is Cytoplasmic envelopment protein 3 (66 aa).

Gly2 carries the N-myristoyl glycine; by host lipid modification.

This sequence belongs to the herpesviridae cytoplasmic envelopment protein 3 family. Interacts with cytoplasmic envelopment protein 2; this interaction is essential for the proper localization of each protein to the assembly complex and thus for the production of infectious virus. In terms of processing, phosphorylated. Phosphorylation does not seem to be required for recycling to the host Golgi apparatus. Packaging is selective for underphosphorylated forms.

Its subcellular location is the virion tegument. The protein localises to the virion membrane. It is found in the host cell membrane. It localises to the host Golgi apparatus membrane. Its function is as follows. Plays an important role in the cytoplasmic envelopment of tegument proteins and capsids during the assembly and egress processes. Also participates in viral entry at the fusion step probably by regulating the core fusion machinery. The sequence is that of Cytoplasmic envelopment protein 3 (38) from Saimiriine herpesvirus 2 (strain 11) (SaHV-2).